Here is a 131-residue protein sequence, read N- to C-terminus: Superoxide dismutase [Ni] (131 aa).

The propeptide occupies 1 to 14 (MLSRLFAPKVTVSA). 3 residues coordinate Ni(2+): His-15, Cys-16, and Cys-20.

It belongs to the nickel superoxide dismutase family. In terms of assembly, homohexamer. The hexameric protein has a roughly the shape of a hollow sphere with an outer diameter of 60 angstroms and a large interior cavity. Requires Ni(2+) as cofactor.

The protein resides in the cytoplasm. The catalysed reaction is 2 superoxide + 2 H(+) = H2O2 + O2. This chain is Superoxide dismutase [Ni] (sodN), found in Streptomyces coelicolor (strain ATCC BAA-471 / A3(2) / M145).